The sequence spans 223 residues: MKRN2 opposite strand protein (223 aa).

The sequence is that of MKRN2 opposite strand protein (MKRN2OS) from Homo sapiens (Human).